We begin with the raw amino-acid sequence, 513 residues long: ATP synthase subunit alpha (513 aa).

169–176 (GDRQTGKT) contributes to the ATP binding site.

It belongs to the ATPase alpha/beta chains family. F-type ATPases have 2 components, CF(1) - the catalytic core - and CF(0) - the membrane proton channel. CF(1) has five subunits: alpha(3), beta(3), gamma(1), delta(1), epsilon(1). CF(0) has three main subunits: a(1), b(2) and c(9-12). The alpha and beta chains form an alternating ring which encloses part of the gamma chain. CF(1) is attached to CF(0) by a central stalk formed by the gamma and epsilon chains, while a peripheral stalk is formed by the delta and b chains.

It localises to the cell inner membrane. It catalyses the reaction ATP + H2O + 4 H(+)(in) = ADP + phosphate + 5 H(+)(out). Produces ATP from ADP in the presence of a proton gradient across the membrane. The alpha chain is a regulatory subunit. The protein is ATP synthase subunit alpha of Nitrosomonas europaea (strain ATCC 19718 / CIP 103999 / KCTC 2705 / NBRC 14298).